The chain runs to 270 residues: tRNA pseudouridine synthase A (270 aa).

Aspartate 60 acts as the Nucleophile in catalysis. Residues 107 to 111 (FHARF) form an RNA binding region. Tyrosine 118 provides a ligand contact to substrate. Residues 168–172 (QCQSR) form an interaction with tRNA region.

Belongs to the tRNA pseudouridine synthase TruA family. As to quaternary structure, homodimer.

It carries out the reaction uridine(38/39/40) in tRNA = pseudouridine(38/39/40) in tRNA. Its function is as follows. Formation of pseudouridine at positions 38, 39 and 40 in the anticodon stem and loop of transfer RNAs. The protein is tRNA pseudouridine synthase A of Shigella sonnei (strain Ss046).